A 529-amino-acid chain; its full sequence is F-box/LRR-repeat protein At5g63520 (529 aa).

The disordered stretch occupies residues 1–22 (MAEVSLTKKEMTTKGKSENSKK). Positions 31–78 (VPIAAMNEDLLHNILLRLPAKSFAFASCVNRFWSSVCNRILSRPKMIS) constitute an F-box domain. LRR repeat units follow at residues 265–288 (GNEP…IFAR) and 418–441 (QVYL…LRNL).

This Arabidopsis thaliana (Mouse-ear cress) protein is F-box/LRR-repeat protein At5g63520.